The following is a 141-amino-acid chain: Hemoglobin subunit alpha (141 aa).

Residues 1 to 141 (VLSAADKTNV…VATVLTSKYR (141 aa)) enclose the Globin domain. At S3 the chain carries Phosphoserine. An N6-succinyllysine modification is found at K7. The residue at position 8 (T8) is a Phosphothreonine. K11 carries the post-translational modification N6-succinyllysine. At K16 the chain carries N6-acetyllysine; alternate. At K16 the chain carries N6-succinyllysine; alternate. The residue at position 24 (Y24) is a Phosphotyrosine. Phosphoserine is present on S35. An N6-succinyllysine modification is found at K40. A Phosphoserine modification is found at S49. H58 is a binding site for O2. A heme b-binding site is contributed by H87. S102 is subject to Phosphoserine. T108 is subject to Phosphothreonine. S124 is modified (phosphoserine). Phosphothreonine is present on residues T134 and T137. Position 138 is a phosphoserine (S138).

The protein belongs to the globin family. As to quaternary structure, heterotetramer of two alpha chains and two beta chains. Red blood cells.

Functionally, involved in oxygen transport from the lung to the various peripheral tissues. In terms of biological role, hemopressin acts as an antagonist peptide of the cannabinoid receptor CNR1. Hemopressin-binding efficiently blocks cannabinoid receptor CNR1 and subsequent signaling. In Ctenodactylus gundi (Northern gundi), this protein is Hemoglobin subunit alpha (HBA).